The following is a 316-amino-acid chain: DnaJ homolog subfamily B member 13 (316 aa).

The J domain occupies 4–68 (DYYSVLGITR…MKRGIYDKFG (65 aa)).

As to quaternary structure, homodimer. Component of the axonemal radial spoke complex 1 (RS1), at least composed of spoke head proteins RSPH1, RSPH3, RSPH9 and the cilia-specific component RSPH4A or sperm-specific component RSPH6A, spoke stalk proteins RSPH14, DNAJB13, DYDC1, ROPN1L and NME5, and the anchor protein IQUB. Interacts with SUN5. Interacts with IQUB. Specifically expressed in testis and trachea.

Its subcellular location is the cell projection. It is found in the cilium. It localises to the flagellum. In terms of biological role, functions as part of axonemal radial spoke complexes that play an important part in the motility of sperm and cilia. This Homo sapiens (Human) protein is DnaJ homolog subfamily B member 13 (DNAJB13).